Consider the following 302-residue polypeptide: tRNA dimethylallyltransferase (302 aa).

9–16 contacts ATP; the sequence is GPTGTGKS. 11–16 provides a ligand contact to substrate; it reads TGTGKS.

This sequence belongs to the IPP transferase family. As to quaternary structure, monomer. Requires Mg(2+) as cofactor.

It catalyses the reaction adenosine(37) in tRNA + dimethylallyl diphosphate = N(6)-dimethylallyladenosine(37) in tRNA + diphosphate. Catalyzes the transfer of a dimethylallyl group onto the adenine at position 37 in tRNAs that read codons beginning with uridine, leading to the formation of N6-(dimethylallyl)adenosine (i(6)A). This Mycolicibacterium smegmatis (strain ATCC 700084 / mc(2)155) (Mycobacterium smegmatis) protein is tRNA dimethylallyltransferase.